Here is a 718-residue protein sequence, read N- to C-terminus: ADP-ribosylation factor-binding protein GGA3 (718 aa).

One can recognise a VHS domain in the interval 16 to 146 (ATNPSNRQED…MLKRQGIVQS (131 aa)). Ser159 and Ser275 each carry phosphoserine. The GAT domain occupies 171 to 298 (DEEKSKLLAR…VINSYKTIIE (128 aa)). The segment at 299–588 (GQIVNGEVTT…VHVPLESIKP (290 aa)) is unstructured hinge. Composition is skewed to low complexity over residues 334-350 (APSN…SGIP) and 360-369 (GPPRSRSSSQ). Residues 334-381 (APSNSSPALAPPTSGIPILPPPPQTSGPPRSRSSSQAEAPPGSDSTNN) form a disordered region. The Autoinhibitory signature appears at 387–391 (DEELL). 2 disordered regions span residues 395 to 455 (LTDP…MSQA) and 477 to 506 (SFMF…STSH). Residues 589-710 (SSALPVTAYD…TELGEVDQFP (122 aa)) enclose the GAE domain.

It belongs to the GGA protein family. Monomer. Interacts with GGA1 and GGA2. Binds to clathrin and activated ARFs, such as ARF1, ARF5 and ARF6. Binds RABEP1 and RABGEF1. Interacts with the membrane proteins M6PR/CD-MPR and IGF2R/CI-MPR and the accessory proteins SYNRG, EPN4, NECAP1, NECAP2 and AFTPH/aftiphilin. Interacts with TSG101 and UBC. Interacts with ADRA2B. Interacts with NTRK1; the interaction is independent of NTRK1 activation and ubiquitination. Interacts (via VHS domain) with BACE1 (via DXXLL motif). Post-translationally, phosphorylated by CK2 and dephosphorylated by PP2A. Phosphorylation of GGA3 allows the internal DXXLL motif to bind the VHS domain and to inhibit the recognition of cargo signals. In terms of processing, ubiquitinated. Proteolytically cleaved during apoptosis by CASP3.

The protein localises to the golgi apparatus. It localises to the trans-Golgi network membrane. The protein resides in the endosome membrane. It is found in the early endosome membrane. Its subcellular location is the recycling endosome membrane. In terms of biological role, plays a role in protein sorting and trafficking between the trans-Golgi network (TGN) and endosomes. Mediates the ARF-dependent recruitment of clathrin to the TGN and binds ubiquitinated proteins and membrane cargo molecules with a cytosolic acidic cluster-dileucine (DXXLL) motif. Its function is as follows. Plays a role in protein sorting and trafficking between the trans-Golgi network (TGN) and endosomes. Mediates the ARF-dependent recruitment of clathrin to the TGN and binds ubiquitinated proteins and membrane cargo molecules with a cytosolic acidic cluster-dileucine (DXXLL) motif. Mediates export of the GPCR receptor ADRA2B to the cell surface. Involved in BACE1 transport and sorting as well as regulation of BACE1 protein levels. Regulates retrograde transport of BACE1 from endosomes to the trans-Golgi network via interaction through the VHS motif and dependent of BACE1 phosphorylation. Modulates BACE1 protein levels independently of the interaction between VHS domain and DXXLL motif through recognition of ubiquitination. Key player in a novel DXXLL-mediated endosomal sorting machinery to the recycling pathway that targets NTRK1 to the plasma membrane. In Mus musculus (Mouse), this protein is ADP-ribosylation factor-binding protein GGA3 (Gga3).